The sequence spans 96 residues: RING finger protein Z (96 aa).

Basic and acidic residues predominate over residues 1–10; it reads MGNCRSKQES. The tract at residues 1-21 is disordered; it reads MGNCRSKQESHPICPNTQTPE. Gly-2 is lipidated: N-myristoyl glycine; by host. The RING-type; atypical zinc-finger motif lies at 41-77; that stretch reads CKCCWFADRNLINCSDHYLCLRCLNVMLRTSNLCNIC. The short motif at 91-94 is the PTAP/PSAP motif element; sequence PTAP.

The protein belongs to the arenaviridae Z protein family. As to quaternary structure, interacts with protein NP; this interaction probably directs the encapsidated genome to budding sites. Interacts (via RING domain) with polymerase L; this interaction inhibits viral transcription and replication, Z partially blocks the product exit tunnel for the releasing nascent RNA product. Interacts with the glycoprotein complex; this interaction plays a role in virion budding. Interacts with host eIF4E; this interaction results in eIF4E reduced affinity for its substrate, the 5'-m7 G cap structure. Interacts (via late-budding domain) with host TSG101; this interaction is essential for budding and release of viral particles. Interacts with host RPLP0; this interaction may serve to load ribosome-like particles inside the virion. Interacts with host PML; this interaction induces PML bodies redistribution in the cytoplasm upon viral infection. Myristoylation is required for the role of RING finger protein Z in assembly and budding.

It is found in the virion. Its subcellular location is the host cytoplasm. It localises to the host perinuclear region. The protein localises to the host cell membrane. Plays a crucial role in virion assembly and budding. Expressed late in the virus life cycle, it acts as an inhibitor of viral transcription and RNA synthesis by interacting with the viral polymerase L. Presumably recruits the NP encapsidated genome to cellular membranes at budding sites via direct interaction with NP. Plays critical roles in the final steps of viral release by interacting with host TSG101, a member of the vacuolar protein-sorting pathway and using other cellular host proteins involved in vesicle formation pathway. The budding of the virus progeny occurs after association of protein Z with the viral glycoprotein complex SSP-GP1-GP2 at the cell periphery, step that requires myristoylation of protein Z. Also selectively represses protein production by associating with host eIF4E. In cell-based minigenome assay, has an inhibitory effect on the ribonucleoprotein machinery (vRNP), which is responsible for the replication and transcription of the viral genome. This is RING finger protein Z from Hylaeamys megacephalus (Large-headed rice rat).